The sequence spans 260 residues: 3-methyl-2-oxobutanoate hydroxymethyltransferase (260 aa).

Mg(2+) is bound by residues Asp-42 and Asp-81. 3-methyl-2-oxobutanoate-binding positions include 42 to 43 (DS), Asp-81, and Lys-109. Mg(2+) is bound at residue Glu-111. The Proton acceptor role is filled by Glu-178.

Belongs to the PanB family. Homodecamer; pentamer of dimers. Requires Mg(2+) as cofactor.

It localises to the cytoplasm. It carries out the reaction 3-methyl-2-oxobutanoate + (6R)-5,10-methylene-5,6,7,8-tetrahydrofolate + H2O = 2-dehydropantoate + (6S)-5,6,7,8-tetrahydrofolate. The protein operates within cofactor biosynthesis; (R)-pantothenate biosynthesis; (R)-pantoate from 3-methyl-2-oxobutanoate: step 1/2. Functionally, catalyzes the reversible reaction in which hydroxymethyl group from 5,10-methylenetetrahydrofolate is transferred onto alpha-ketoisovalerate to form ketopantoate. This chain is 3-methyl-2-oxobutanoate hydroxymethyltransferase, found in Vesicomyosocius okutanii subsp. Calyptogena okutanii (strain HA).